Consider the following 445-residue polypeptide: Tubby-like F-box protein 10 (445 aa).

Residues 57–112 (SRWANLPPELLFDVIKRLEESESNWPARKHVVACASVCRSWRAMCQEIVLGPEICG) form the F-box domain. A compositionally biased stretch (low complexity) spans 382-398 (PQPQGTGAAAAPTSAPA). Residues 382–401 (PQPQGTGAAAAPTSAPAHPE) form a disordered region.

The protein belongs to the TUB family. As to quaternary structure, part of a SCF (ASK-cullin-F-box) protein ligase complex. Interacts with SKP1A/ASK1. As to expression, ubiquitous.

It localises to the nucleus. Its pathway is protein modification; protein ubiquitination. Component of SCF(ASK-cullin-F-box) E3 ubiquitin ligase complexes, which may mediate the ubiquitination and subsequent proteasomal degradation of target proteins. The protein is Tubby-like F-box protein 10 of Arabidopsis thaliana (Mouse-ear cress).